The primary structure comprises 184 residues: Peptide deformylase 2 (184 aa).

2 residues coordinate Fe cation: Cys110 and His153. Glu154 is a catalytic residue. A Fe cation-binding site is contributed by His157.

It belongs to the polypeptide deformylase family. Requires Fe(2+) as cofactor.

It carries out the reaction N-terminal N-formyl-L-methionyl-[peptide] + H2O = N-terminal L-methionyl-[peptide] + formate. In terms of biological role, removes the formyl group from the N-terminal Met of newly synthesized proteins. Requires at least a dipeptide for an efficient rate of reaction. N-terminal L-methionine is a prerequisite for activity but the enzyme has broad specificity at other positions. This chain is Peptide deformylase 2, found in Bacillus cereus (strain ATCC 14579 / DSM 31 / CCUG 7414 / JCM 2152 / NBRC 15305 / NCIMB 9373 / NCTC 2599 / NRRL B-3711).